A 140-amino-acid polypeptide reads, in one-letter code: Large ribosomal subunit protein uL11 (140 aa).

This sequence belongs to the universal ribosomal protein uL11 family. As to quaternary structure, part of the ribosomal stalk of the 50S ribosomal subunit. Interacts with L10 and the large rRNA to form the base of the stalk. L10 forms an elongated spine to which L12 dimers bind in a sequential fashion forming a multimeric L10(L12)X complex. One or more lysine residues are methylated.

Its function is as follows. Forms part of the ribosomal stalk which helps the ribosome interact with GTP-bound translation factors. This chain is Large ribosomal subunit protein uL11, found in Halothermothrix orenii (strain H 168 / OCM 544 / DSM 9562).